Reading from the N-terminus, the 147-residue chain is Large ribosomal subunit protein uL16 (147 aa).

Residues 1–20 (MLMPKKVKHRKVQRGRMKGK) are disordered.

Belongs to the universal ribosomal protein uL16 family. As to quaternary structure, part of the 50S ribosomal subunit.

Its function is as follows. Binds 23S rRNA and is also seen to make contacts with the A and possibly P site tRNAs. The polypeptide is Large ribosomal subunit protein uL16 (Clostridium kluyveri (strain ATCC 8527 / DSM 555 / NBRC 12016 / NCIMB 10680 / K1)).